A 587-amino-acid chain; its full sequence is Arginine--tRNA ligase (587 aa).

The 'HIGH' region motif lies at 127 to 137 (ANPTGPLHVGH).

It belongs to the class-I aminoacyl-tRNA synthetase family. Monomer.

The protein resides in the cytoplasm. The enzyme catalyses tRNA(Arg) + L-arginine + ATP = L-arginyl-tRNA(Arg) + AMP + diphosphate. This Dechloromonas aromatica (strain RCB) protein is Arginine--tRNA ligase.